Reading from the N-terminus, the 441-residue chain is Histidinol dehydrogenase (441 aa).

The NAD(+) site is built by Tyr136, Gln197, and Asn220. Substrate is bound by residues Ser243, Gln265, and His268. Zn(2+) is bound by residues Gln265 and His268. Catalysis depends on proton acceptor residues Glu333 and His334. Residues His334, Asp367, Glu421, and His426 each contribute to the substrate site. Residue Asp367 coordinates Zn(2+). His426 lines the Zn(2+) pocket.

The protein belongs to the histidinol dehydrogenase family. The cofactor is Zn(2+).

The enzyme catalyses L-histidinol + 2 NAD(+) + H2O = L-histidine + 2 NADH + 3 H(+). Its pathway is amino-acid biosynthesis; L-histidine biosynthesis; L-histidine from 5-phospho-alpha-D-ribose 1-diphosphate: step 9/9. Functionally, catalyzes the sequential NAD-dependent oxidations of L-histidinol to L-histidinaldehyde and then to L-histidine. The polypeptide is Histidinol dehydrogenase (Pseudomonas fluorescens (strain Pf0-1)).